We begin with the raw amino-acid sequence, 126 residues long: MPEPAKSAPAPKKGSKKAVTKAQKKDGKKRKRSRKESYSVYVYKVLKQVHPDTGISSKAMGIMNSFVNDIFERIASEASRLAHYNKRSTITSREIQTAVRLLLPGELAKHAVSEGTKAVTKYTSAK.

Residues Met1–Lys12 are compositionally biased toward low complexity. Positions Met1–Glu36 are disordered. Residue Pro2 is modified to N-acetylproline. Glu3 is subject to ADP-ribosyl glutamic acid. An N6-(2-hydroxyisobutyryl)lysine; alternate modification is found at Lys6. Lys6 is subject to N6-(beta-hydroxybutyryl)lysine; alternate. N6-acetyllysine; alternate is present on Lys6. Lys6 carries the N6-butyryllysine; alternate modification. An N6-crotonyllysine; alternate modification is found at Lys6. N6-lactoyllysine; alternate is present on Lys6. Lys6 participates in a covalent cross-link: Glycyl lysine isopeptide (Lys-Gly) (interchain with G-Cter in SUMO2); alternate. Ser7 bears the ADP-ribosylserine mark. Lys12 is modified (N6-(beta-hydroxybutyryl)lysine; alternate). N6-acetyllysine; alternate occurs at positions 12 and 13. Lys12 and Lys13 each carry N6-crotonyllysine; alternate. Lys12 is modified (N6-lactoyllysine; alternate). Lys13 carries the post-translational modification N6-(2-hydroxyisobutyryl)lysine; alternate. A Phosphoserine; by STK4/MST1 modification is found at Ser15. Lys16, Lys17, Lys21, and Lys24 each carry N6-acetyllysine; alternate. 4 positions are modified to N6-crotonyllysine; alternate: Lys16, Lys17, Lys21, and Lys24. Lys16, Lys17, Lys21, and Lys24 each carry N6-lactoyllysine; alternate. N6-glutaryllysine; alternate is present on Lys17. N6-(2-hydroxyisobutyryl)lysine; alternate is present on residues Lys21 and Lys24. Lys21 is subject to N6-(beta-hydroxybutyryl)lysine; alternate. Lys21 is modified (N6-butyryllysine; alternate). A Glycyl lysine isopeptide (Lys-Gly) (interchain with G-Cter in SUMO2); alternate cross-link involves residue Lys21. An N6-(2-hydroxyisobutyryl)lysine modification is found at Lys25. Residue Lys35 is modified to N6-(2-hydroxyisobutyryl)lysine; alternate. Lys35 carries the post-translational modification N6-(beta-hydroxybutyryl)lysine; alternate. Lys35 is modified (N6-crotonyllysine; alternate). N6-glutaryllysine; alternate is present on Lys35. Lys35 carries the N6-succinyllysine; alternate modification. A Glycyl lysine isopeptide (Lys-Gly) (interchain with G-Cter in ubiquitin); alternate cross-link involves residue Lys35. The residue at position 36 (Glu36) is a PolyADP-ribosyl glutamic acid. Ser37 carries the phosphoserine; by AMPK modification. An N6-(2-hydroxyisobutyryl)lysine; alternate mark is found at Lys44, Lys47, and Lys58. N6-lactoyllysine; alternate is present on Lys44. N6-glutaryllysine; alternate is present on residues Lys44 and Lys47. Lys47 is modified (N6-methyllysine; alternate). Residue Lys58 is modified to N6,N6-dimethyllysine; alternate. At Arg80 the chain carries Dimethylated arginine. The residue at position 86 (Lys86) is an N6-(2-hydroxyisobutyryl)lysine; alternate. Lys86 carries the post-translational modification N6-acetyllysine; alternate. Lys86 carries the post-translational modification N6-lactoyllysine; alternate. The residue at position 86 (Lys86) is an N6,N6,N6-trimethyllysine; alternate. Omega-N-methylarginine occurs at positions 87 and 93. Position 109 is an N6-(2-hydroxyisobutyryl)lysine; alternate (Lys109). At Lys109 the chain carries N6-(beta-hydroxybutyryl)lysine; alternate. Position 109 is an N6-lactoyllysine; alternate (Lys109). Lys109 carries the post-translational modification N6-glutaryllysine; alternate. Position 109 is an N6-methyllysine; alternate (Lys109). The O-linked (GlcNAc) serine glycan is linked to Ser113. Residue Thr116 is modified to Phosphothreonine. N6-(2-hydroxyisobutyryl)lysine; alternate occurs at positions 117 and 121. Position 117 is an N6-(beta-hydroxybutyryl)lysine; alternate (Lys117). 2 positions are modified to N6-lactoyllysine; alternate: Lys117 and Lys121. Residues Lys117 and Lys121 each carry the N6-glutaryllysine; alternate modification. Lys117 and Lys121 each carry N6-succinyllysine; alternate. Lys117 carries the N6-methylated lysine; alternate modification. Lys121 is covalently cross-linked (Glycyl lysine isopeptide (Lys-Gly) (interchain with G-Cter in ubiquitin); alternate).

Belongs to the histone H2B family. The nucleosome is a histone octamer containing two molecules each of H2A, H2B, H3 and H4 assembled in one H3-H4 heterotetramer and two H2A-H2B heterodimers. The octamer wraps approximately 147 bp of DNA. Monoubiquitination at Lys-35 (H2BK34Ub) by the MSL1/MSL2 dimer is required for histone H3 'Lys-4' (H3K4me) and 'Lys-79' (H3K79me) methylation and transcription activation at specific gene loci, such as HOXA9 and MEIS1 loci. Similarly, monoubiquitination at Lys-121 (H2BK120Ub) by the RNF20/40 complex gives a specific tag for epigenetic transcriptional activation and is also prerequisite for histone H3 'Lys-4' and 'Lys-79' methylation. It also functions cooperatively with the FACT dimer to stimulate elongation by RNA polymerase II. H2BK120Ub also acts as a regulator of mRNA splicing: deubiquitination by USP49 is required for efficient cotranscriptional splicing of a large set of exons. In terms of processing, phosphorylated on Ser-15 (H2BS14ph) by STK4/MST1 during apoptosis; which facilitates apoptotic chromatin condensation. Also phosphorylated on Ser-15 in response to DNA double strand breaks (DSBs), and in correlation with somatic hypermutation and immunoglobulin class-switch recombination. Phosphorylation at Ser-37 (H2BS36ph) by AMPK in response to stress promotes transcription. Post-translationally, glcNAcylation at Ser-113 promotes monoubiquitination of Lys-121. It fluctuates in response to extracellular glucose, and associates with transcribed genes. ADP-ribosylated by PARP1 or PARP2 on Ser-7 (H2BS6ADPr) in response to DNA damage. H2BS6ADPr promotes recruitment of CHD1L. Mono-ADP-ribosylated on Glu-3 (H2BE2ADPr) by PARP3 in response to single-strand breaks. Poly ADP-ribosylation on Glu-36 (H2BE35ADPr) by PARP1 regulates adipogenesis: it inhibits phosphorylation at Ser-37 (H2BS36ph), thereby blocking expression of pro-adipogenetic genes. In terms of processing, crotonylation (Kcr) is specifically present in male germ cells and marks testis-specific genes in post-meiotic cells, including X-linked genes that escape sex chromosome inactivation in haploid cells. Crotonylation marks active promoters and enhancers and confers resistance to transcriptional repressors. It is also associated with post-meiotically activated genes on autosomes. Post-translationally, hydroxybutyrylation of histones is induced by starvation. Lactylated in macrophages by EP300/P300 by using lactoyl-CoA directly derived from endogenous or exogenous lactate, leading to stimulates gene transcription.

Its subcellular location is the nucleus. The protein resides in the chromosome. In terms of biological role, core component of nucleosome. Nucleosomes wrap and compact DNA into chromatin, limiting DNA accessibility to the cellular machineries which require DNA as a template. Histones thereby play a central role in transcription regulation, DNA repair, DNA replication and chromosomal stability. DNA accessibility is regulated via a complex set of post-translational modifications of histones, also called histone code, and nucleosome remodeling. The chain is Histone H2B type 1-K from Mus musculus (Mouse).